The following is a 296-amino-acid chain: Solute carrier protein FPSE_08119 (296 aa).

The next 3 helical transmembrane spans lie at 12–32 (GLAA…GMVA), 122–142 (AGVG…VILI), and 219–239 (AVAA…FDFV). Solcar repeat units follow at residues 16–102 (LQTA…FEKE), 114–205 (LSFG…AKNQ), and 213–296 (SPPV…GPHS).

Belongs to the mitochondrial carrier (TC 2.A.29) family.

The protein resides in the mitochondrion inner membrane. Solute carrier protein; part of the Fusarium detoxification of benzoxazolinone cluster involved in the degradation of benzoxazolinones produced by the host plant. Maize, wheat, and rye produce the 2 benzoxazinone phytoanticipins 2,4-dihy-droxy-7-methoxy-1,4-benzoxazin-3-one (DIMBOA) and 2,4-dihydroxy-1,4-benzoxazin-3-one (DIBOA) that, due to their inherent instability once released, spontaneously degrade to the more stable corresponding benzoxazolinones, 6-methoxy-2-benzoxazolinone (MBOA) and 2-benzoxazolinone (BOA), respectively. The chain is Solute carrier protein FPSE_08119 from Fusarium pseudograminearum (strain CS3096) (Wheat and barley crown-rot fungus).